We begin with the raw amino-acid sequence, 175 residues long: Protein FLOWERING LOCUS T (175 aa).

It belongs to the phosphatidylethanolamine-binding protein family. Interacts with FD/BZIP14 and FDP/BZIP27. Interacts with FTIP1/MCTP1 in phloem companion cells. Interacts with NAKR1. As to expression, mostly localized in leaves vasculature.

The protein resides in the cytoplasm. Its subcellular location is the nucleus. The protein localises to the endoplasmic reticulum. Functionally, component of the mobile flower-promoting signal (floral stimulus or florigen). Promotes the transition from vegetative growth to flowering. Required for 'SEPALLATA3' (SEP3) and 'FRUITFULL' (FUL) accumulation in mature rosette leaves. Seems to acts in parallel with 'LEAFY' to induce flowering by regulating 'APETALA1'. Translated in leaves and then transported to the shoot apical meristem where it activates the transcription of several floral meristem identity genes. May play a role in both the autonomous and the long-day flowering pathways. In Arabidopsis thaliana (Mouse-ear cress), this protein is Protein FLOWERING LOCUS T.